Here is a 315-residue protein sequence, read N- to C-terminus: MPNLKAIRDRIKTIKDTRKITEAMRLVAAAKVRRAQEQVMASRPFADRLAQVLYGLQTRLRFEDANLPLLAKRPVKTVALLVVTGDRGLCGGYNTNVIRRAKERTEELEAEGIKYTLVIVGRKAAQYFQRRDYPIDAVYSGLEQIPSASEAGQIANELLSLFLSETVDRVELIYTKFVSLISSKPVVQTLLPLDPQGLEAADDEIFRLTTRASHLEVNREKVTSNLPALPPDMIFEQDPVQILDALLPLYLSNQLLRALQEAAASELAARMTAMNNASDNAQTLIGTLTLSYNKARQAAITQEILEVVAGAEALR.

It belongs to the ATPase gamma chain family. As to quaternary structure, F-type ATPases have 2 components, CF(1) - the catalytic core - and CF(0) - the membrane proton channel. CF(1) has five subunits: alpha(3), beta(3), gamma(1), delta(1), epsilon(1). CF(0) has three main subunits: a, b and c.

It localises to the cellular thylakoid membrane. Produces ATP from ADP in the presence of a proton gradient across the membrane. The gamma chain is believed to be important in regulating ATPase activity and the flow of protons through the CF(0) complex. The polypeptide is ATP synthase gamma chain (Synechococcus sp. (strain PCC 6716)).